The sequence spans 1003 residues: Cation-transporting ATPase HMA5 (1003 aa).

A disordered region spans residues 6 to 25 (LSAVAGGGRPAAAGGGGDEM). The span at 10 to 22 (AGGGRPAAAGGGG) shows a compositional bias: gly residues. 3 HMA domains span residues 51-117 (EEAH…FDAE), 133-199 (LSAQ…FEAA), and 207-273 (DKIL…NGRL). Cu cation contacts are provided by C62, C65, C144, and C147. A run of 8 helical transmembrane segments spans residues 302–322 (SLFL…IPFI), 331–351 (GPFH…QFVV), 372–392 (VLVV…LLYG), 396–416 (GFHP…VLFG), 562–582 (IFVP…FLCG), 599–619 (FVFS…CALG), 938–958 (FFAM…LFPF), and 966–986 (WLAG…SLLL).

This sequence belongs to the cation transport ATPase (P-type) (TC 3.A.3) family. Type IB subfamily. Expressed in root vascular cylinder, vascular bundles and mesophyll cells of leaf blades, and anther walls and microspores of stamens.

Its subcellular location is the cell membrane. In terms of biological role, metal efflux transporter that may play a role in detoxification of heavy metals, such as zinc, copper, lead and cadmium, especially in the shoots. The protein is Cation-transporting ATPase HMA5 of Oryza sativa subsp. japonica (Rice).